The chain runs to 189 residues: Peptidyl-tRNA hydrolase (189 aa).

Tyr-15 contacts tRNA. His-20 (proton acceptor) is an active-site residue. Residues Phe-66, Asn-68, and Asn-114 each coordinate tRNA.

The protein belongs to the PTH family. As to quaternary structure, monomer.

It localises to the cytoplasm. It carries out the reaction an N-acyl-L-alpha-aminoacyl-tRNA + H2O = an N-acyl-L-amino acid + a tRNA + H(+). In terms of biological role, hydrolyzes ribosome-free peptidyl-tRNAs (with 1 or more amino acids incorporated), which drop off the ribosome during protein synthesis, or as a result of ribosome stalling. Its function is as follows. Catalyzes the release of premature peptidyl moieties from peptidyl-tRNA molecules trapped in stalled 50S ribosomal subunits, and thus maintains levels of free tRNAs and 50S ribosomes. The protein is Peptidyl-tRNA hydrolase of Streptococcus mutans serotype c (strain ATCC 700610 / UA159).